A 349-amino-acid polypeptide reads, in one-letter code: CCN family member 2 (349 aa).

The signal sequence occupies residues 1–26 (MSATGLGPVRCAFVLLLALCSRPASS). The IGFBP N-terminal domain maps to 27–98 (QDCSAPCQCP…NRKIGVCTAK (72 aa)). 6 cysteine pairs are disulfide-bonded: Cys-29/Cys-54, Cys-33/Cys-56, Cys-35/Cys-57, Cys-43/Cys-60, Cys-68/Cys-82, and Cys-74/Cys-95. The region spanning 101-167 (APCVFGGTVY…GKCCEEWVCD (67 aa)) is the VWFC domain. The TSP type-1 domain maps to 198 to 243 (NCLVQTTEWSACSKTCGMGISTRVTNDNAFCRLEKQSRLCMVRPCE). Residues 247–349 (EENIKKGKKC…YYRKMYGDMA (103 aa)) form a heparin-binding region. 5 cysteine pairs are disulfide-bonded: Cys-256–Cys-293, Cys-273–Cys-307, Cys-284–Cys-323, Cys-287–Cys-325, and Cys-292–Cys-329. Residues 256 to 330 (CIRTPKISKP…KTCACHYNCP (75 aa)) form the CTCK domain.

Belongs to the CCN family. Monomer. Interacts with TSKU.

Its subcellular location is the secreted. It is found in the extracellular space. It localises to the extracellular matrix. Major connective tissue mitoattractant secreted by vascular endothelial cells. Promotes proliferation and differentiation of chondrocytes. Is involved in the stimulation of osteoblast differentiation and has a critical role in osteogenesis. Mediates heparin- and divalent cation-dependent cell adhesion in many cell types including fibroblasts, myofibroblasts, endothelial and epithelial cells. Enhances fibroblast growth factor-induced DNA synthesis. In Bos taurus (Bovine), this protein is CCN family member 2 (CCN2).